Here is a 279-residue protein sequence, read N- to C-terminus: Large ribosomal subunit protein uL2 (279 aa).

Disordered stretches follow at residues methionine 1–lysine 59 and valine 224–arginine 279. The span at threonine 50–lysine 59 shows a compositional bias: basic residues. Positions arginine 253–isoleucine 268 are enriched in basic and acidic residues. Over residues valine 269–arginine 279 the composition is skewed to basic residues.

The protein belongs to the universal ribosomal protein uL2 family. In terms of assembly, part of the 50S ribosomal subunit. Forms a bridge to the 30S subunit in the 70S ribosome.

In terms of biological role, one of the primary rRNA binding proteins. Required for association of the 30S and 50S subunits to form the 70S ribosome, for tRNA binding and peptide bond formation. It has been suggested to have peptidyltransferase activity; this is somewhat controversial. Makes several contacts with the 16S rRNA in the 70S ribosome. The polypeptide is Large ribosomal subunit protein uL2 (Pseudarthrobacter chlorophenolicus (strain ATCC 700700 / DSM 12829 / CIP 107037 / JCM 12360 / KCTC 9906 / NCIMB 13794 / A6) (Arthrobacter chlorophenolicus)).